Reading from the N-terminus, the 423-residue chain is Citrate synthase-like protein clz17 (423 aa).

Active-site residues include histidine 357 and aspartate 413.

The protein belongs to the citrate synthase family.

It participates in secondary metabolite biosynthesis. Its function is as follows. Citrate synthase-like protein; part of the gene cluster that mediates the biosynthesis of squalestatin S1 (SQS1, also known as zaragozic acid A), a heavily oxidized fungal polyketide that offers potent cholesterol lowering activity by targeting squalene synthase (SS). SQS1 is composed of a 2,8-dioxobicyclic[3.2.1]octane-3,4,5-tricarboxyclic acid core that is connected to two lipophilic polyketide arms. These initial steps feature the priming of an unusual benzoic acid starter unit onto the highly reducing polyketide synthase clz14, followed by oxaloacetate extension and product release to generate a tricarboxylic acid containing product. The phenylalanine ammonia lyase (PAL) clz10 and the acyl-CoA ligase clz12 are involved in transforming phenylalanine into benzoyl-CoA. The citrate synthase-like protein clz17 is involved in connecting the C-alpha-carbons of the hexaketide chain and oxaloacetate to afford the tricarboxylic acid unit. The potential hydrolytic enzymes, clz11 and clz13, are in close proximity to pks2 and may participate in product release. On the other side, the tetraketide arm is synthesized by a the squalestatin tetraketide synthase clz2 and enzymatically esterified to the core in the last biosynthetic step, by the acetyltransferase clz6. The biosynthesis of the tetraketide must involve 3 rounds of chain extension. After the first and second rounds methyl-transfer occurs, and in all rounds of extension the ketoreductase and dehydratase are active. The enoyl reductase and C-MeT of clz2 are not active in the final round of extension. The acetyltransferase clz6 appears to have a broad substrate selectivity for its acyl CoA substrate, allowing the in vitro synthesis of novel squalestatins. The biosynthesis of SQS1 requires several oxidative steps likely performed by oxidoreductases clz3, clz15 and clz16. Finally, in support of the identification of the cluster as being responsible for SQS1 production, the cluster contains a gene encoding a putative squalene synthase (SS) clz20, suggesting a likely mechanism for self-resistance. In Cochliobolus lunatus (Filamentous fungus), this protein is Citrate synthase-like protein clz17.